Consider the following 373-residue polypeptide: Lipoyl synthase (373 aa).

The disordered stretch occupies residues 14–36 (VSNDHPSSSPLQPGVKQSGEDKI). 7 residues coordinate [4Fe-4S] cluster: cysteine 81, cysteine 86, cysteine 92, cysteine 107, cysteine 111, cysteine 114, and serine 323. Positions 93-312 (FSHGTATFMI…EEYGMALGFS (220 aa)) constitute a Radical SAM core domain. The disordered stretch occupies residues 346 to 373 (PAVSSTEHRERNTIASKSASKTESIHHR). A compositionally biased stretch (polar residues) spans 358-367 (TIASKSASKT).

Belongs to the radical SAM superfamily. Lipoyl synthase family. [4Fe-4S] cluster serves as cofactor.

It is found in the cytoplasm. It carries out the reaction [[Fe-S] cluster scaffold protein carrying a second [4Fe-4S](2+) cluster] + N(6)-octanoyl-L-lysyl-[protein] + 2 oxidized [2Fe-2S]-[ferredoxin] + 2 S-adenosyl-L-methionine + 4 H(+) = [[Fe-S] cluster scaffold protein] + N(6)-[(R)-dihydrolipoyl]-L-lysyl-[protein] + 4 Fe(3+) + 2 hydrogen sulfide + 2 5'-deoxyadenosine + 2 L-methionine + 2 reduced [2Fe-2S]-[ferredoxin]. The protein operates within protein modification; protein lipoylation via endogenous pathway; protein N(6)-(lipoyl)lysine from octanoyl-[acyl-carrier-protein]: step 2/2. Its function is as follows. Catalyzes the radical-mediated insertion of two sulfur atoms into the C-6 and C-8 positions of the octanoyl moiety bound to the lipoyl domains of lipoate-dependent enzymes, thereby converting the octanoylated domains into lipoylated derivatives. The protein is Lipoyl synthase of Xylella fastidiosa (strain M23).